The following is a 250-amino-acid chain: tRNA pseudouridine synthase A (250 aa).

Aspartate 52 serves as the catalytic Nucleophile. Residue tyrosine 111 coordinates substrate.

The protein belongs to the tRNA pseudouridine synthase TruA family. In terms of assembly, homodimer.

It carries out the reaction uridine(38/39/40) in tRNA = pseudouridine(38/39/40) in tRNA. In terms of biological role, formation of pseudouridine at positions 38, 39 and 40 in the anticodon stem and loop of transfer RNAs. The polypeptide is tRNA pseudouridine synthase A (Methylorubrum extorquens (strain PA1) (Methylobacterium extorquens)).